A 265-amino-acid polypeptide reads, in one-letter code: Undecaprenyl-diphosphatase 1 (265 aa).

7 helical membrane passes run 4-24, 42-62, 84-104, 108-128, 184-204, 217-237, and 245-265; these read IITAFILGIVEGLAEFLPISS, AKTFEIVIQLGAILAIAILYH, FHVFLGVFPAVVAGLLLHDII, LFQPYTVVIGLVAGAILMIFA, SEFSFLIALPVMVGATGLDLL, MFAVGFITSFIVAMLAVVTFL, and LKPFAYYRILLAILFTVFVLL.

It belongs to the UppP family.

The protein localises to the cell membrane. It catalyses the reaction di-trans,octa-cis-undecaprenyl diphosphate + H2O = di-trans,octa-cis-undecaprenyl phosphate + phosphate + H(+). In terms of biological role, catalyzes the dephosphorylation of undecaprenyl diphosphate (UPP). Confers resistance to bacitracin. In Bacillus thuringiensis subsp. konkukian (strain 97-27), this protein is Undecaprenyl-diphosphatase 1.